A 148-amino-acid polypeptide reads, in one-letter code: uncharacterized protein (148 aa).

CBS domains are found at residues 8–68 and 74–130; these read MTAD…PNSQ and MTEK…ERAG. The tract at residues 127 to 148 is disordered; that stretch reads ERAGSALSDISEGDNREEGFFH. Basic and acidic residues predominate over residues 139–148; that stretch reads GDNREEGFFH.

This is an uncharacterized protein from Bacillus subtilis (strain 168).